The primary structure comprises 449 residues: Glucose-6-phosphate isomerase (449 aa).

Glu290 acts as the Proton donor in catalysis. Residues His311 and Lys425 contribute to the active site.

It belongs to the GPI family.

It localises to the cytoplasm. The catalysed reaction is alpha-D-glucose 6-phosphate = beta-D-fructose 6-phosphate. The protein operates within carbohydrate biosynthesis; gluconeogenesis. It participates in carbohydrate degradation; glycolysis; D-glyceraldehyde 3-phosphate and glycerone phosphate from D-glucose: step 2/4. Functionally, catalyzes the reversible isomerization of glucose-6-phosphate to fructose-6-phosphate. This is Glucose-6-phosphate isomerase from Exiguobacterium sibiricum (strain DSM 17290 / CCUG 55495 / CIP 109462 / JCM 13490 / 255-15).